We begin with the raw amino-acid sequence, 303 residues long: uncharacterized protein (303 aa).

This is an uncharacterized protein from Magallana gigas (Pacific oyster).